A 312-amino-acid polypeptide reads, in one-letter code: Protein ABIL2 (312 aa).

Positions 173–287 (TIRETPPPPV…TEQQQPSKSK (115 aa)) are disordered. Residues 183–199 (RKSTSQSSSPRQPPQRS) show a composition bias toward low complexity. Over residues 230-251 (SVATRKSASISRPTTPSKSRSI) the composition is skewed to polar residues. Over residues 269–279 (AFEKDNQKETE) the composition is skewed to basic and acidic residues.

The protein belongs to the ABI family. In terms of assembly, binds SCAR.

It localises to the cytoplasm. The protein resides in the cytoskeleton. Functionally, involved in regulation of actin and microtubule organization. Part of a WAVE complex that activates the Arp2/3 complex. The sequence is that of Protein ABIL2 (ABIL2) from Arabidopsis thaliana (Mouse-ear cress).